A 274-amino-acid polypeptide reads, in one-letter code: MSEISIATSVPSGPGPLIGNQPDGPAKVIVRDLNFYYGQNHALKHINLSLAANRVTAFIGPSGCGKSTLLRVFNRMYDLYPGQRAEGQVMLDGNNILDPKLDLNLLRARVGMVFQKPTPFPMTIYENIAFGIRLYEKISKSEMDGRVEKALRSAALWNEVKDKLNASGLSLSGGQQQRLCIARTIAVRPEVILFDEPCSALDPISTAKIEELIDELKEDYTIAIVTHNMQQAARVSESTAFMYLGELIEFGPTNKIFTSPNDRRTQDYITGRFG.

The segment covering Met-1 to Pro-11 has biased composition (polar residues). The tract at residues Met-1 to Gln-21 is disordered. Positions Val-28–Ile-269 constitute an ABC transporter domain. An ATP-binding site is contributed by Gly-60–Ser-67.

It belongs to the ABC transporter superfamily. Phosphate importer (TC 3.A.1.7) family. As to quaternary structure, the complex is composed of two ATP-binding proteins (PstB), two transmembrane proteins (PstC and PstA) and a solute-binding protein (PstS).

The protein resides in the cell inner membrane. It catalyses the reaction phosphate(out) + ATP + H2O = ADP + 2 phosphate(in) + H(+). Functionally, part of the ABC transporter complex PstSACB involved in phosphate import. Responsible for energy coupling to the transport system. This Rhodopseudomonas palustris (strain BisB5) protein is Phosphate import ATP-binding protein PstB.